Reading from the N-terminus, the 155-residue chain is Ribosome maturation factor RimP (155 aa).

This sequence belongs to the RimP family.

It is found in the cytoplasm. Required for maturation of 30S ribosomal subunits. This Phocaeicola vulgatus (strain ATCC 8482 / DSM 1447 / JCM 5826 / CCUG 4940 / NBRC 14291 / NCTC 11154) (Bacteroides vulgatus) protein is Ribosome maturation factor RimP.